Reading from the N-terminus, the 93-residue chain is Small ribosomal subunit protein uS19 (93 aa).

Belongs to the universal ribosomal protein uS19 family.

Functionally, protein S19 forms a complex with S13 that binds strongly to the 16S ribosomal RNA. The protein is Small ribosomal subunit protein uS19 of Caldanaerobacter subterraneus subsp. tengcongensis (strain DSM 15242 / JCM 11007 / NBRC 100824 / MB4) (Thermoanaerobacter tengcongensis).